A 514-amino-acid chain; its full sequence is 2-isopropylmalate synthase (514 aa).

One can recognise a Pyruvate carboxyltransferase domain in the interval 5-268; the sequence is LIIFDTTLRD…DVGIDTTQIV (264 aa). The Mn(2+) site is built by Asp-14, His-202, His-204, and Asn-239. The segment at 395–514 is regulatory domain; sequence KFVSLSQRSE…KDDKLNPQRA (120 aa).

This sequence belongs to the alpha-IPM synthase/homocitrate synthase family. LeuA type 1 subfamily. As to quaternary structure, homodimer. It depends on Mn(2+) as a cofactor.

It localises to the cytoplasm. The enzyme catalyses 3-methyl-2-oxobutanoate + acetyl-CoA + H2O = (2S)-2-isopropylmalate + CoA + H(+). It participates in amino-acid biosynthesis; L-leucine biosynthesis; L-leucine from 3-methyl-2-oxobutanoate: step 1/4. In terms of biological role, catalyzes the condensation of the acetyl group of acetyl-CoA with 3-methyl-2-oxobutanoate (2-ketoisovalerate) to form 3-carboxy-3-hydroxy-4-methylpentanoate (2-isopropylmalate). This is 2-isopropylmalate synthase from Burkholderia cenocepacia (strain HI2424).